The chain runs to 492 residues: Cytochrome P450 monooxygenase rdc4 (492 aa).

Position 435 (C435) interacts with heme.

Belongs to the cytochrome P450 family. The cofactor is heme.

It participates in secondary metabolite biosynthesis. Functionally, cytochrome P450 monooxygenase; part of the gene cluster that mediates the biosynthesis of radicicol, a resorcylic acid lactone (RAL) that irreversibly inhibits the HSP90 molecular chaperone, an important target for cancer chemotherapy. The radicicol cluster encodes only two apparent post-PKS enzymes, a cytochrome P450 monooxygenase (rdc4) and a non-heme halogenase (rdc2) that could introduce the epoxide and the chlorine, respectively. If this cluster includes all the genes required for radicicol biosynthesis, the remaining structural features of radicicol are presumably generated by the PKSs rdc1 and rdc5. The C-2' ketone could arise if the R-PKS rdc5 and NR-PKS rdc1 each carry out four iterations, in contrast to the five iteration-three iteration split for the hypothemycin PKSs. The origin of the cis 5',6' double bond is not known. The radicicol R-PKS rdc5 ER domain may catalyze either double bond isomerization or reduction in the third iteration. This is Cytochrome P450 monooxygenase rdc4 from Metacordyceps chlamydosporia (Nematophagous fungus).